The chain runs to 166 residues: Calmodulin-like protein 5 (166 aa).

4 consecutive EF-hand domains span residues 11–46, 47–82, 96–131, and 132–166; these read EQVA…LGQT, PTRE…KASR, AADE…LGEK, and LTDE…LSDQ. Ca(2+)-binding residues include aspartate 24, aspartate 26, aspartate 28, cysteine 30, glutamate 35, aspartate 60, aspartate 62, asparagine 64, threonine 66, glutamate 71, aspartate 109, aspartate 111, aspartate 113, and glutamate 120. N6,N6,N6-trimethyllysine is present on lysine 131. The Ca(2+) site is built by aspartate 145, aspartate 147, aspartate 149, glutamine 151, and glutamate 156.

It belongs to the calmodulin family.

Potential calcium sensor. The protein is Calmodulin-like protein 5 (CML5) of Oryza sativa subsp. japonica (Rice).